A 131-amino-acid polypeptide reads, in one-letter code: uncharacterized protein (131 aa).

An N-terminal signal peptide occupies residues 1 to 19 (MRESLFIIFFQFVCHSSNS). The next 2 membrane-spanning stretches (helical) occupy residues 33–53 (PLLTWTAPSIDLALSILALFF) and 111–131 (VSFNGDLIIIFVGETIFFFLF).

It is found in the membrane. This is an uncharacterized protein from Saccharomyces cerevisiae (strain ATCC 204508 / S288c) (Baker's yeast).